A 391-amino-acid polypeptide reads, in one-letter code: tRNA (cytosine(38)-C(5))-methyltransferase (391 aa).

The 388-residue stretch at 4-391 folds into the SAM-dependent MTase C5-type domain; sequence LRALELYSGI…VAKLIKILCD (388 aa). S-adenosyl-L-methionine is bound by residues 13–15, D34, 57–58, and S76; these read IGG and IE. Residue C79 is part of the active site. S-adenosyl-L-methionine is bound at residue S376.

The protein belongs to the class I-like SAM-binding methyltransferase superfamily. C5-methyltransferase family.

Its subcellular location is the cytoplasm. It carries out the reaction cytidine(38) in tRNA + S-adenosyl-L-methionine = 5-methylcytidine(38) in tRNA + S-adenosyl-L-homocysteine + H(+). Specifically methylates cytosine 38 in the anticodon loop of tRNA(Asp). Has higher activity on tRNA(Asp) modified with queuosine at position 34. This is tRNA (cytosine(38)-C(5))-methyltransferase (TRDMT1) from Bos taurus (Bovine).